The sequence spans 142 residues: uncharacterized protein (142 aa).

The next 3 helical transmembrane spans lie at 3-23, 30-50, and 91-111; these read LIFI…FNLL, SVSW…AVWI, and FFLL…AYFS.

It localises to the membrane. This is an uncharacterized protein from Saccharomyces cerevisiae (strain ATCC 204508 / S288c) (Baker's yeast).